We begin with the raw amino-acid sequence, 971 residues long: Translation initiation factor IF-2 (971 aa).

Basic and acidic residues predominate over residues 48-63 (DHLRKSHGATDGDKRK). Disordered stretches follow at residues 48-86 (DHLR…ARTI) and 101-381 (DVAE…STFQ). Residues 105-114 (GADQGQAQVA) are compositionally biased toward low complexity. Basic and acidic residues predominate over residues 121-181 (ELKRREEEAR…EEEAATKRAA (61 aa)). Positions 182 to 203 (AEAAAAQQQAAAQQAAAEQEAT) are enriched in low complexity. Basic and acidic residues predominate over residues 210 to 261 (DEARAAAERAAQREAAKKAEDAAREAADKARAEQEEISKRRAAAEAEARAIR). The span at 277-286 (PPKPVEPPKP) shows a compositional bias: pro residues. Low complexity predominate over residues 304-326 (ARPAVKKPAGAAAPATTQAPAGA). A compositionally biased stretch (gly residues) spans 356 to 369 (SSGGVDRGWRGGPK). Residues 471-640 (PRPPVVTVMG…LLQAEVLELK (170 aa)) form the tr-type G domain. The tract at residues 480–487 (GHVDHGKT) is G1. Residue 480 to 487 (GHVDHGKT) coordinates GTP. Residues 505–509 (GITQH) are G2. The segment at 526–529 (DTPG) is G3. GTP is bound by residues 526–530 (DTPGH) and 580–583 (NKID). The G4 stretch occupies residues 580 to 583 (NKID). The segment at 616 to 618 (SAK) is G5.

The protein belongs to the TRAFAC class translation factor GTPase superfamily. Classic translation factor GTPase family. IF-2 subfamily.

Its subcellular location is the cytoplasm. In terms of biological role, one of the essential components for the initiation of protein synthesis. Protects formylmethionyl-tRNA from spontaneous hydrolysis and promotes its binding to the 30S ribosomal subunits. Also involved in the hydrolysis of GTP during the formation of the 70S ribosomal complex. This chain is Translation initiation factor IF-2, found in Burkholderia orbicola (strain MC0-3).